A 68-amino-acid polypeptide reads, in one-letter code: Cold shock-like protein CspA (68 aa).

The CSD domain occupies 4–64; sequence GTVKWFNDAK…GPKGLQAQNV (61 aa).

It localises to the cytoplasm. This chain is Cold shock-like protein CspA (cspA), found in Stigmatella aurantiaca (strain DW4/3-1).